The following is a 104-amino-acid chain: Protein RnfH (104 aa).

This sequence belongs to the UPF0125 (RnfH) family.

This Pseudomonas savastanoi pv. phaseolicola (strain 1448A / Race 6) (Pseudomonas syringae pv. phaseolicola (strain 1448A / Race 6)) protein is Protein RnfH.